The primary structure comprises 421 residues: UDP-N-acetylglucosamine 1-carboxyvinyltransferase (421 aa).

Residue 22–23 (KN) coordinates phosphoenolpyruvate. Residue R93 participates in UDP-N-acetyl-alpha-D-glucosamine binding. Residue C117 is the Proton donor of the active site. C117 is subject to 2-(S-cysteinyl)pyruvic acid O-phosphothioketal. Residues 122-126 (RPVDL), D308, and I330 each bind UDP-N-acetyl-alpha-D-glucosamine.

It belongs to the EPSP synthase family. MurA subfamily.

It is found in the cytoplasm. The catalysed reaction is phosphoenolpyruvate + UDP-N-acetyl-alpha-D-glucosamine = UDP-N-acetyl-3-O-(1-carboxyvinyl)-alpha-D-glucosamine + phosphate. Its pathway is cell wall biogenesis; peptidoglycan biosynthesis. Cell wall formation. Adds enolpyruvyl to UDP-N-acetylglucosamine. This chain is UDP-N-acetylglucosamine 1-carboxyvinyltransferase, found in Pseudomonas fluorescens (strain SBW25).